Here is a 133-residue protein sequence, read N- to C-terminus: T-cell receptor beta chain V region 86T1 (133 aa).

A signal peptide spans 1 to 21; the sequence is MSCRLLLYVSLCLVETALMNT. Residues 22 to 113 form a v segment region; that stretch reads KITQSPRYLI…SAVYFCASSH (92 aa). N-linked (GlcNAc...) asparagine glycans are attached at residues N36 and N75. C41 and C109 are disulfide-bonded. The interval 114–133 is j segment; sequence GQGVSGNTLYFGEGSRLIVV.

This is T-cell receptor beta chain V region 86T1 from Mus musculus (Mouse).